The following is a 586-amino-acid chain: Transcription elongation regulator 1-like protein (586 aa).

Positions Met1–Asp30 are disordered. Residues Phe7 to Gln23 are compositionally biased toward basic residues. Residues Thr148–Glu181 enclose the WW 1 domain. Disordered regions lie at residues Thr281–Pro344 and Asp378–Leu448. Residues Lys306 to Pro317 show a composition bias toward basic and acidic residues. One can recognise a WW 2 domain in the interval Pro339–Asp372. Composition is skewed to basic and acidic residues over residues Asp378 to Pro387, Asp411 to Thr421, and Lys428 to Thr439. FF domains follow at residues Leu450–Thr503 and Lys515–Ile570.

In Homo sapiens (Human), this protein is Transcription elongation regulator 1-like protein (TCERG1L).